The following is a 281-amino-acid chain: Probable endonuclease 4 (281 aa).

Residues H69, H109, E145, D179, H182, H216, D229, H231, and E261 each contribute to the Zn(2+) site.

Belongs to the AP endonuclease 2 family. Requires Zn(2+) as cofactor.

It catalyses the reaction Endonucleolytic cleavage to 5'-phosphooligonucleotide end-products.. Its function is as follows. Endonuclease IV plays a role in DNA repair. It cleaves phosphodiester bonds at apurinic or apyrimidinic (AP) sites, generating a 3'-hydroxyl group and a 5'-terminal sugar phosphate. The sequence is that of Probable endonuclease 4 from Chlorobaculum parvum (strain DSM 263 / NCIMB 8327) (Chlorobium vibrioforme subsp. thiosulfatophilum).